The sequence spans 246 residues: Probable transcriptional regulatory protein CLD_1467 (246 aa).

The protein belongs to the TACO1 family.

It is found in the cytoplasm. This is Probable transcriptional regulatory protein CLD_1467 from Clostridium botulinum (strain Okra / Type B1).